A 45-amino-acid chain; its full sequence is Ice-structuring protein SS-8 (45 aa).

Met-1 bears the Blocked amino end (Met) mark. 3 consecutive repeats follow at residues 9–21 (KAAR…ALAA), 22–33 (KTAADAAAKAAA), and 34–45 (KAAAIAAAAASA).

Belongs to the type-I AFP family.

Functionally, antifreeze proteins lower the blood freezing point. The sequence is that of Ice-structuring protein SS-8 from Myoxocephalus scorpius (Shorthorn sculpin).